The sequence spans 567 residues: Phosphoglucomutase-like protein 5 (567 aa).

Residues 1 to 26 (MEGSPIPVLTVPTAPYEDQRPTGGGG) are disordered. T120 carries the post-translational modification Phosphothreonine. S122 carries the phosphoserine modification.

This sequence belongs to the phosphohexose mutase family. As to quaternary structure, interacts with DMD/dystrophin; the interaction is direct. Interacts with UTRN/utrophin.

It is found in the cell junction. The protein resides in the adherens junction. It localises to the cytoplasm. Its subcellular location is the cytoskeleton. The protein localises to the cell membrane. It is found in the sarcolemma. Functionally, component of adherens-type cell-cell and cell-matrix junctions. Has no phosphoglucomutase activity in vitro. The sequence is that of Phosphoglucomutase-like protein 5 from Rattus norvegicus (Rat).